The following is a 219-amino-acid chain: Deoxyribose-phosphate aldolase (219 aa).

Asp93 functions as the Proton donor/acceptor in the catalytic mechanism. The Schiff-base intermediate with acetaldehyde role is filled by Lys154. Lys179 acts as the Proton donor/acceptor in catalysis.

Belongs to the DeoC/FbaB aldolase family. DeoC type 1 subfamily.

It is found in the cytoplasm. It carries out the reaction 2-deoxy-D-ribose 5-phosphate = D-glyceraldehyde 3-phosphate + acetaldehyde. The protein operates within carbohydrate degradation; 2-deoxy-D-ribose 1-phosphate degradation; D-glyceraldehyde 3-phosphate and acetaldehyde from 2-deoxy-alpha-D-ribose 1-phosphate: step 2/2. In terms of biological role, catalyzes a reversible aldol reaction between acetaldehyde and D-glyceraldehyde 3-phosphate to generate 2-deoxy-D-ribose 5-phosphate. The chain is Deoxyribose-phosphate aldolase from Haloquadratum walsbyi (strain DSM 16790 / HBSQ001).